A 349-amino-acid polypeptide reads, in one-letter code: D-alanine--D-alanine ligase (349 aa).

An ATP-grasp domain is found at 132 to 335; that stretch reads KHVFEAVGVP…YSDLIEKLVD (204 aa). Position 162–217 (162–217) interacts with ATP; the sequence is VEKLEFPVFVKPANMGSSVGISKVDDLADLQPALSEAYKYDNRVVIEQGVDAREIE. The Mg(2+) site is built by D289, E302, and N304.

This sequence belongs to the D-alanine--D-alanine ligase family. Mg(2+) is required as a cofactor. Requires Mn(2+) as cofactor.

The protein localises to the cytoplasm. It catalyses the reaction 2 D-alanine + ATP = D-alanyl-D-alanine + ADP + phosphate + H(+). Its pathway is cell wall biogenesis; peptidoglycan biosynthesis. Cell wall formation. This is D-alanine--D-alanine ligase from Lactococcus lactis subsp. cremoris (strain SK11).